Reading from the N-terminus, the 236-residue chain is Phosphoribosylaminoimidazole-succinocarboxamide synthase (236 aa).

Belongs to the SAICAR synthetase family.

The enzyme catalyses 5-amino-1-(5-phospho-D-ribosyl)imidazole-4-carboxylate + L-aspartate + ATP = (2S)-2-[5-amino-1-(5-phospho-beta-D-ribosyl)imidazole-4-carboxamido]succinate + ADP + phosphate + 2 H(+). Its pathway is purine metabolism; IMP biosynthesis via de novo pathway; 5-amino-1-(5-phospho-D-ribosyl)imidazole-4-carboxamide from 5-amino-1-(5-phospho-D-ribosyl)imidazole-4-carboxylate: step 1/2. The protein is Phosphoribosylaminoimidazole-succinocarboxamide synthase of Lysinibacillus sphaericus (strain C3-41).